Here is a 42-residue protein sequence, read N- to C-terminus: Purine nucleoside phosphorylase DeoD-type (42 aa).

8–9 (SD) serves as a coordination point for a purine D-ribonucleoside. Asp9 serves as the catalytic Proton donor.

The protein belongs to the PNP/UDP phosphorylase family. Homohexamer; trimer of homodimers.

The enzyme catalyses a purine D-ribonucleoside + phosphate = a purine nucleobase + alpha-D-ribose 1-phosphate. It catalyses the reaction a purine 2'-deoxy-D-ribonucleoside + phosphate = a purine nucleobase + 2-deoxy-alpha-D-ribose 1-phosphate. In terms of biological role, catalyzes the reversible phosphorolytic breakdown of the N-glycosidic bond in the beta-(deoxy)ribonucleoside molecules, with the formation of the corresponding free purine bases and pentose-1-phosphate. The polypeptide is Purine nucleoside phosphorylase DeoD-type (Mycoplasmoides pirum (Mycoplasma pirum)).